A 207-amino-acid chain; its full sequence is Outer-membrane lipoprotein LolB (207 aa).

A signal peptide spans 1–21; that stretch reads MTLPDFRLIRLLPLASLVLTA. C22 carries N-palmitoyl cysteine lipidation. C22 is lipidated: S-diacylglycerol cysteine.

The protein belongs to the LolB family. Monomer.

Its subcellular location is the cell outer membrane. Functionally, plays a critical role in the incorporation of lipoproteins in the outer membrane after they are released by the LolA protein. The polypeptide is Outer-membrane lipoprotein LolB (Salmonella typhi).